Reading from the N-terminus, the 380-residue chain is MGSSCRIECIFFSEFHPTLGPKITYQVPEDFISRELFDTVQVYIITKPELQNKLITVTAMEKKLIGCPVCIEHKKYSRNALLFNLGFVCDAQAKTCALEPIVKKLAGYLTTLELESSFVSNEESKQKLVPIMTILLEELNASGRCTLPIDESNTIHLKVIEQRPDPPVAQEYDVPVFTKDKEDFFSSQWDLTTQQILPYIDGFRHVQKISAEADVELNLVRIAIQNLLYYGVVTLVSILQYSNVYCPTPKVQDLVDDKSLQEACLSYVTKQGHKRASLRDVFQLYCSLSPGTTVRDLIGRHPQQLQHVDERKLIQFGLMKNLIRRLQKYPVRVSREERSHPARLYTGCHSYDEICCKTGMSYHELDERLENDPNIIICWK.

Residues 1–133 (MGSSCRIECI…SKQKLVPIMT (133 aa)) are interaction with PDPK1. Arg-78 serves as a coordination point for GDP. Asymmetric dimethylarginine is present on Arg-78. Residues Lys-158 and Lys-357 each participate in a glycyl lysine isopeptide (Lys-Gly) (interchain with G-Cter in ubiquitin) cross-link.

The protein belongs to the NPR2 family. In terms of assembly, within the GATOR complex, component of the GATOR1 subcomplex, made of DEPDC5, NPRL2 and NPRL3. GATOR1 mediates the strong interaction of the GATOR complex with small GTPases Rag (RagA/RRAGA, RagB/RRAGB, RagC/RRAGC and/or RagD/RRAGD) heterodimers. GATOR1 interacts with GPR155/LYCHOS; interaction takes place in presence of cholesterol and prevents interaction between GATOR1 and KICSTOR. Interacts with PDPK1. Post-translationally, in the presence of abundant amino acids, ubiquitinated at Lys-158 and Lys-357 via 'Lys-6'-linked ubiquitination by the WDR24 component of the GATOR2 complex, thereby inhibiting the GATOR1 complex and promoting mTORC1 activation. Asymmetric dimethylation at Arg-78 by PRMT1 inhibits the GTPase activator activity of the GATOR1 complex and consequently inducing timely mTORC1 activation under methionine-sufficient conditions.

Its subcellular location is the lysosome membrane. Catalytic component of the GATOR1 complex, a multiprotein complex that functions as an inhibitor of the amino acid-sensing branch of the mTORC1 pathway. In response to amino acid depletion, the GATOR1 complex has GTPase activating protein (GAP) activity and strongly increases GTP hydrolysis by RagA/RRAGA (or RagB/RRAGB) within heterodimeric Rag complexes, thereby turning them into their inactive GDP-bound form, releasing mTORC1 from lysosomal surface and inhibiting mTORC1 signaling. In the presence of abundant amino acids, the GATOR1 complex is ubiquitinated and inhibited by GATOR2. Within the GATOR1 complex, NPRL2 constitutes the catalytic subunit that mediates the GTPase activator activity and under methionine-sufficient conditions, the GTPase activator activity is inhibited by PRMT1 through methylation and consequently inducing timely mTORC1 activation. Functionally, suppresses Src-dependent tyrosine phosphorylation and activation of PDPK1 and its downstream signaling. Down-regulates PDPK1 kinase activity by interfering with tyrosine phosphorylation at 'Tyr-9', 'Tyr-373' and 'Tyr-376' residues. May act as a tumor suppressor. Suppresses cell growth and enhances sensitivity to various anticancer drugs. The chain is GATOR1 complex protein NPRL2 from Mus musculus (Mouse).